A 60-amino-acid polypeptide reads, in one-letter code: Metallothionein A (60 aa).

Positions 1-28 are beta; it reads MDPCECSKSGNCNCGGSCTCTNCSCKSC. Residues Cys-4, Cys-6, Cys-12, Cys-14, Cys-18, Cys-20, Cys-23, Cys-25, Cys-28, Cys-32, Cys-33, Cys-35, Cys-36, Cys-40, Cys-43, Cys-47, Cys-49, Cys-54, Cys-58, and Cys-59 each contribute to the a divalent metal cation site. An alpha region spans residues 29–60; that stretch reads KKSCCPCCPSGCTKCASGCVCKGKTCDTSCCQ.

The protein belongs to the metallothionein superfamily. Type 1 family.

In terms of biological role, metallothioneins have a high content of cysteine residues that bind various heavy metals. This is Metallothionein A (mta) from Parachaenichthys charcoti (Charcot's dragonfish).